The sequence spans 197 residues: uncharacterized protein (197 aa).

4 consecutive transmembrane segments (helical) span residues 12 to 41, 78 to 100, 120 to 142, and 162 to 184; these read LCIFGIGLFVPATGTFACGLLLVLGFWVLF, LIQGFFPLVRMMLCPYLFITALS, VGVFGIMIAGISLVRELVAFGCV, and IRFAATGAGTLISCGIVLWIFRS.

The protein resides in the cell membrane. This is an uncharacterized protein from Treponema pallidum (strain Nichols).